The following is a 642-amino-acid chain: Sterol O-acyltransferase 2 (642 aa).

A disordered region spans residues 174–194 (KSSPDAVDSVGKNDGAAPTTV). Phosphoserine is present on residues Ser-175 and Ser-176. The next 5 helical transmembrane spans lie at 215–235 (FSGLYVAFWMAIAFGAVKALI), 292–312 (TGWIFTSIYEFLFVIFYMYLT), 404–424 (ISAKSFFWFTMFPTLIYQIEY), 442–462 (IFGTIFLMMIDAQILMYPVAM), and 485–505 (LLVDIVPGFIVMYILDFYLIW). Positions 523–529 (FYGDWWN) match the FYXDWWN motif motif. 2 consecutive transmembrane segments (helical) span residues 567-587 (ATLMTFFLSSVVHELAMYVIF) and 622-642 (VIFWLGICMGPSVMCTLYLTF). His-579 is an active-site residue.

Belongs to the membrane-bound acyltransferase family. Sterol o-acyltransferase subfamily.

It is found in the endoplasmic reticulum membrane. It catalyses the reaction ergosterol + an acyl-CoA = ergosteryl ester + CoA. The enzyme catalyses zymosterol + an acyl-CoA = zymosterol ester + CoA. In terms of biological role, sterol O-acyltransferase that catalyzes the formation of stery esters. This Saccharomyces cerevisiae (strain ATCC 204508 / S288c) (Baker's yeast) protein is Sterol O-acyltransferase 2.